We begin with the raw amino-acid sequence, 296 residues long: 4-hydroxy-tetrahydrodipicolinate synthase (296 aa).

Thr-47 is a pyruvate binding site. Tyr-135 acts as the Proton donor/acceptor in catalysis. Lys-163 acts as the Schiff-base intermediate with substrate in catalysis. Ile-205 is a binding site for pyruvate.

The protein belongs to the DapA family. Homotetramer; dimer of dimers.

It is found in the cytoplasm. The catalysed reaction is L-aspartate 4-semialdehyde + pyruvate = (2S,4S)-4-hydroxy-2,3,4,5-tetrahydrodipicolinate + H2O + H(+). The protein operates within amino-acid biosynthesis; L-lysine biosynthesis via DAP pathway; (S)-tetrahydrodipicolinate from L-aspartate: step 3/4. In terms of biological role, catalyzes the condensation of (S)-aspartate-beta-semialdehyde [(S)-ASA] and pyruvate to 4-hydroxy-tetrahydrodipicolinate (HTPA). In Macrococcus caseolyticus (strain JCSC5402) (Macrococcoides caseolyticum), this protein is 4-hydroxy-tetrahydrodipicolinate synthase.